A 108-amino-acid polypeptide reads, in one-letter code: Evasin P1229 (108 aa).

The first 31 residues, 1–31 (MEVRTFAFLQIVVFVALGIQLFAAVTDAADA), serve as a signal peptide directing secretion. Cystine bridges form between cysteine 41–cysteine 63, cysteine 45–cysteine 65, and cysteine 56–cysteine 76. Asparagine 44 carries N-linked (GlcNAc...) asparagine glycosylation. Positions 88–108 (GDPNNSDLDAATPRHPDASSR) are disordered. A glycan (N-linked (GlcNAc...) asparagine) is linked at asparagine 91. Positions 99 to 108 (TPRHPDASSR) are enriched in basic and acidic residues.

Its subcellular location is the secreted. In terms of biological role, salivary chemokine-binding protein which binds to host chemokines CXCL1 and CXCL8. The chain is Evasin P1229 from Ixodes ricinus (Common tick).